The sequence spans 459 residues: Glutamate--tRNA ligase 2 (459 aa).

The 'HIGH' region motif lies at 8–18 (PSPTGYIHIGN). Positions 249-253 (GLSKR) match the 'KMSKS' region motif. An ATP-binding site is contributed by lysine 252.

Belongs to the class-I aminoacyl-tRNA synthetase family. Glutamate--tRNA ligase type 1 subfamily. As to quaternary structure, monomer.

The protein resides in the cytoplasm. The catalysed reaction is tRNA(Glu) + L-glutamate + ATP = L-glutamyl-tRNA(Glu) + AMP + diphosphate. Its function is as follows. Catalyzes the attachment of glutamate to tRNA(Glu) in a two-step reaction: glutamate is first activated by ATP to form Glu-AMP and then transferred to the acceptor end of tRNA(Glu). The protein is Glutamate--tRNA ligase 2 of Bartonella henselae (strain ATCC 49882 / DSM 28221 / CCUG 30454 / Houston 1) (Rochalimaea henselae).